The following is a 538-amino-acid chain: Syncytin-1 (538 aa).

Residues 1–20 (MALPYHIFLFTVLLPSFTLT) form the signal peptide. Over 21–443 (APPPCRCMTS…NTGPWGLLSQ (423 aa)) the chain is Extracellular. A glycan (N-linked (GlcNAc...) asparagine) is linked at asparagine 169. Positions 186 to 189 (CWIC) match the CXXC motif. Intrachain disulfides connect cysteine 186/cysteine 189, cysteine 186/cysteine 405, and cysteine 397/cysteine 404. Asparagine 208, asparagine 214, asparagine 234, asparagine 242, and asparagine 281 each carry an N-linked (GlcNAc...) asparagine glycan. Positions 320 to 340 (ILPFVIGAGVLGALGTGIGGI) are fusion peptide. The segment at 380-396 (LQNRRALDLLTAERGGT) is immunosuppression. The CX6CC motif lies at 397–406 (CLFLGEECCY). Asparagine 409 carries an N-linked (GlcNAc...) asparagine glycan. The chain crosses the membrane as a helical span at residues 444–464 (WMPWILPFLGPLAAIILLLLF). An essential for the fusiogenic function region spans residues 465–484 (GPCIFNLLVNFVSSRIEAVK). Over 465–538 (GPCIFNLLVN…LLRPNSAGSS (74 aa)) the chain is Cytoplasmic. The tract at residues 496-538 (KIYRRPLDRPASPRSDVNDIKGTPPEEISAAQPLLRPNSAGSS) is disordered.

Belongs to the gamma type-C retroviral envelope protein family. HERV class-I W env subfamily. As to quaternary structure, the mature envelope protein (Env) consists of a trimer of SU-TM heterodimers attached probably by a labile interchain disulfide bond. Interacts with the C-type lectin CD209/DC-SIGN. In terms of processing, specific enzymatic cleavages in vivo yield mature proteins. Envelope glycoproteins are synthesized as an inactive precursor that is heavily N-glycosylated and processed likely by furin in the Golgi to yield the mature SU and TM proteins. The cleavage site between SU and TM requires the minimal sequence [KR]-X-[KR]-R. The intracytoplasmic tail cleavage by the viral protease that is required for the fusiogenic activity of some retroviruses envelope proteins seems to have been lost during evolution. Post-translationally, the CXXC motif is highly conserved across a broad range of retroviral envelope proteins. It is thought to participate in the formation of a labile disulfide bond possibly with the CX6CC motif present in the transmembrane protein. Isomerization of the intersubunit disulfide bond to an SU intrachain disulfide bond is thought to occur upon receptor recognition in order to allow membrane fusion. Expressed at higher level in placental syncytiotrophoblast. Expressed at intermediate level in testis. Seems also to be found at low level in adrenal tissue, bone marrow, breast, colon, kidney, ovary, prostate, skin, spleen, thymus, thyroid, brain and trachea. Both mRNA and protein levels are significantly increased in the brain of individuals with multiple sclerosis, particularly in astrocytes and microglia.

The protein resides in the cell membrane. It is found in the virion. In terms of biological role, this endogenous retroviral envelope protein has retained its original fusogenic properties and participates in trophoblast fusion and the formation of a syncytium during placenta morphogenesis. May induce fusion through binding of SLC1A4 and SLC1A5. Functionally, endogenous envelope proteins may have kept, lost or modified their original function during evolution. Retroviral envelope proteins mediate receptor recognition and membrane fusion during early infection. The surface protein (SU) mediates receptor recognition, while the transmembrane protein (TM) acts as a class I viral fusion protein. The protein may have at least 3 conformational states: pre-fusion native state, pre-hairpin intermediate state, and post-fusion hairpin state. During viral and target cell membrane fusion, the coiled coil regions (heptad repeats) assume a trimer-of-hairpins structure, positioning the fusion peptide in close proximity to the C-terminal region of the ectodomain. The formation of this structure appears to drive apposition and subsequent fusion of membranes. The sequence is that of Syncytin-1 (ERVW-1) from Homo sapiens (Human).